Consider the following 456-residue polypeptide: Short chain dehydrogenase tazN (456 aa).

NADP(+) contacts are provided by V45, D99, N126, R160, Y195, K199, and T229. Catalysis depends on Y195, which acts as the Proton donor. K199 serves as the catalytic Lowers pKa of active site Tyr.

This sequence belongs to the short-chain dehydrogenases/reductases (SDR) family.

It functions in the pathway secondary metabolite biosynthesis. Functionally, short chain dehydrogenase; part of the gene cluster that mediates the biosynthesis of azaterrilone A and other azaphilones, a class of fungal metabolites characterized by a highly oxygenated pyrano-quinone bicyclic core and exhibiting a broad range of bioactivities. The first step of the pathway begins with the non-reducing polyketide synthase tazA that assembles one acetyl-CoA starter unit, five malonyl-CoA units, and catalyzes a series of Claisen condensations, methylation, PT-mediated cyclization, and finally releases the first hexaketide precursor through the R-domain. The tazA product then undergoes reduction on its terminal ketone and the following pyran-ring formation by yet undetermined enzyme(s). Dehydration and enoyl reduction, possibly involving the trans-enoyl reductase tazE leads to the next intermediate. TazD is predicted as an acetyltransferase and might catalyze the acetylation steps leading to the synthesis of azaterrilone A. Azaterrilone A is not the final product of the taz pathway and both the highly reducing polyketide synthase tazB and the dual enzyme tazHJ catalyze late steps of the pathway, leading to the production of the 2 final stereoisomers that contain additional polyketide modification whose structures have still to be determined. In Aspergillus terreus (strain NIH 2624 / FGSC A1156), this protein is Short chain dehydrogenase tazN.